The chain runs to 1086 residues: DNA polymerase delta catalytic subunit (1086 aa).

The interval 1–64 is disordered; it reads MTDRSSNEGV…KTSSFEDELA (64 aa). Positions 29-58 are enriched in basic and acidic residues; sequence EITDVKRRRLSERNGYGDKKGSSSKEKTSS. Zn(2+) contacts are provided by cysteine 993, cysteine 996, cysteine 1008, and cysteine 1011. The CysA-type zinc finger occupies 993–1011; it reads CLGCKAPIKKGKTALCENC. [4Fe-4S] cluster is bound by residues cysteine 1040, cysteine 1043, cysteine 1053, and cysteine 1058. A CysB motif motif is present at residues 1040 to 1058; the sequence is CQRCQGSMHQDVICTSRDC.

It belongs to the DNA polymerase type-B family. As to quaternary structure, heterotetramer that consist of the pol3, cdc1, cdc27 and cdm1 subunits. The pol3 subunit contains the polymerase active site and most likely the active site for the 3'-5' exonuclease activity. The cofactor is [4Fe-4S] cluster.

It localises to the nucleus. The enzyme catalyses DNA(n) + a 2'-deoxyribonucleoside 5'-triphosphate = DNA(n+1) + diphosphate. Its function is as follows. Catalytic component of DNA polymerase delta (DNA polymerase III) which participates in chromosomal DNA replication. Required during synthesis of the lagging DNA strands at the replication fork, binds at/or near replication origins and moves along DNA with the replication fork. Participates in leading strand synthesis during replication initiation and termination. Has 3'-5' proofreading exonuclease activity that corrects errors arising during DNA replication. The polypeptide is DNA polymerase delta catalytic subunit (pol3) (Schizosaccharomyces pombe (strain 972 / ATCC 24843) (Fission yeast)).